The following is a 283-amino-acid chain: ATP phosphoribosyltransferase (283 aa).

Belongs to the ATP phosphoribosyltransferase family. Long subfamily. Equilibrium between an active dimeric form, an inactive hexameric form and higher aggregates. Interconversion between the various forms is largely reversible and is influenced by the natural substrates and inhibitors of the enzyme. Mg(2+) is required as a cofactor.

Its subcellular location is the cytoplasm. It carries out the reaction 1-(5-phospho-beta-D-ribosyl)-ATP + diphosphate = 5-phospho-alpha-D-ribose 1-diphosphate + ATP. It functions in the pathway amino-acid biosynthesis; L-histidine biosynthesis; L-histidine from 5-phospho-alpha-D-ribose 1-diphosphate: step 1/9. With respect to regulation, feedback inhibited by histidine. Its function is as follows. Catalyzes the condensation of ATP and 5-phosphoribose 1-diphosphate to form N'-(5'-phosphoribosyl)-ATP (PR-ATP). Has a crucial role in the pathway because the rate of histidine biosynthesis seems to be controlled primarily by regulation of HisG enzymatic activity. This is ATP phosphoribosyltransferase from Mycobacterium sp. (strain KMS).